The chain runs to 495 residues: Glutamyl-tRNA(Gln) amidotransferase subunit A (495 aa).

Residues Lys75 and Ser150 each act as charge relay system in the active site. The active-site Acyl-ester intermediate is Ser174.

The protein belongs to the amidase family. GatA subfamily. In terms of assembly, heterotrimer of A, B and C subunits.

The catalysed reaction is L-glutamyl-tRNA(Gln) + L-glutamine + ATP + H2O = L-glutaminyl-tRNA(Gln) + L-glutamate + ADP + phosphate + H(+). In terms of biological role, allows the formation of correctly charged Gln-tRNA(Gln) through the transamidation of misacylated Glu-tRNA(Gln) in organisms which lack glutaminyl-tRNA synthetase. The reaction takes place in the presence of glutamine and ATP through an activated gamma-phospho-Glu-tRNA(Gln). In Paraburkholderia xenovorans (strain LB400), this protein is Glutamyl-tRNA(Gln) amidotransferase subunit A.